Consider the following 716-residue polypeptide: Fatty acid oxidation complex subunit alpha (716 aa).

Residues 1–189 form an enoyl-CoA hydratase/isomerase region; that stretch reads MIYQSPTIQV…KVGAVDAVVA (189 aa). Position 296 (Asp-296) interacts with substrate. The interval 311–716 is 3-hydroxyacyl-CoA dehydrogenase; the sequence is KDVKSAAVLG…AANNGSYYQA (406 aa). NAD(+) contacts are provided by residues Met-324, Asp-343, 400–402, Lys-407, and Ser-429; that span reads VVE. His-450 serves as the catalytic For 3-hydroxyacyl-CoA dehydrogenase activity. Asn-453 is an NAD(+) binding site. Residues Asn-500 and Tyr-660 each contribute to the substrate site.

It in the N-terminal section; belongs to the enoyl-CoA hydratase/isomerase family. The protein in the C-terminal section; belongs to the 3-hydroxyacyl-CoA dehydrogenase family. As to quaternary structure, heterotetramer of two alpha chains (FadB) and two beta chains (FadA).

The catalysed reaction is a (3S)-3-hydroxyacyl-CoA + NAD(+) = a 3-oxoacyl-CoA + NADH + H(+). It carries out the reaction a (3S)-3-hydroxyacyl-CoA = a (2E)-enoyl-CoA + H2O. The enzyme catalyses a 4-saturated-(3S)-3-hydroxyacyl-CoA = a (3E)-enoyl-CoA + H2O. It catalyses the reaction (3S)-3-hydroxybutanoyl-CoA = (3R)-3-hydroxybutanoyl-CoA. The catalysed reaction is a (3Z)-enoyl-CoA = a 4-saturated (2E)-enoyl-CoA. It carries out the reaction a (3E)-enoyl-CoA = a 4-saturated (2E)-enoyl-CoA. It participates in lipid metabolism; fatty acid beta-oxidation. Its function is as follows. Involved in the aerobic and anaerobic degradation of long-chain fatty acids via beta-oxidation cycle. Catalyzes the formation of 3-oxoacyl-CoA from enoyl-CoA via L-3-hydroxyacyl-CoA. It can also use D-3-hydroxyacyl-CoA and cis-3-enoyl-CoA as substrate. In Shewanella sp. (strain MR-7), this protein is Fatty acid oxidation complex subunit alpha.